The primary structure comprises 1475 residues: Peroxidasin homolog (1475 aa).

Positions 1-23 are cleaved as a signal peptide; sequence MAVRPTRRCLLALLLCFAWWAMA. The LRRNT domain maps to 24–60; it reads VVASKQGAGCPSRCLCFRTTVRCMHLLLEAVPAVAPQ. Disulfide bonds link Cys-33/Cys-39 and Cys-37/Cys-46. 6 LRR repeats span residues 58–81, 82–105, 107–129, 130–153, 154–177, and 179–201; these read APQT…AFRR, LRSL…AFED, ENLK…AFKG, LASL…SFQH, LPKL…TFSQ, and ESMK…LWLA. The LRRCT domain maps to 189–241; it reads NALHCDCEILWLADLLKTYAQSGNAQAAATCEYPRRIQGRSVATITPEELNCE. Cystine bridges form between Cys-193/Cys-240, Cys-195/Cys-219, Cys-264/Cys-314, Cys-360/Cys-409, Cys-451/Cys-499, and Cys-543/Cys-591. Ig-like C2-type domains are found at residues 243 to 329, 339 to 425, 430 to 517, and 518 to 607; these read PRIT…QEVT, PTFV…AFII, PQFT…LTVQ, and PRVT…MVLS. Residue Asn-387 is glycosylated (N-linked (GlcNAc...) asparagine). The stretch at 402-425 is one LRR 7 repeat; it reads SDSGEYTCFASNSVDSIHATAFII. Residues Asn-637, Asn-696, Asn-716, and Asn-728 are each glycosylated (N-linked (GlcNAc...) asparagine). Disulfide bonds link Cys-720/Cys-882, Cys-729/Cys-745, Cys-844/Cys-854, and Cys-848/Cys-872. Asp-823 contributes to the heme b binding site. The active-site Proton acceptor is His-824. Asp-825 is a Ca(2+) binding site. Ca(2+) contacts are provided by Thr-904, Tyr-906, Asp-908, and Ser-910. The cysteines at positions 956 and 967 are disulfide-linked. N-linked (GlcNAc...) asparagine glycosylation occurs at Asn-961. Heme b-binding residues include Glu-977 and His-1071. An LRR 8 repeat occupies 1148-1172; the sequence is ALDLAAINIQRGRDHGIPPYHDYRV. At Tyr-1173 the chain carries Phosphotyrosine. 2 disulfides stabilise this stretch: Cys-1174-Cys-1231 and Cys-1272-Cys-1298. Asn-1175 carries an N-linked (GlcNAc...) asparagine glycan. Ser-1177 carries the phosphoserine modification. An LRR 9 repeat occupies 1267 to 1288; the sequence is LARILCDNSDNITRVQQDVFRV. Residues Asn-1277 and Asn-1364 are each glycosylated (N-linked (GlcNAc...) asparagine). A required in homotrimerization region spans residues 1312-1407; that stretch reads CCEDCRTRGQ…QINSLESRLS (96 aa). The 59-residue stretch at 1409-1467 folds into the VWFC domain; sequence TECVDDSGESHGGNTKWKKDPCTVCECKNGQITCFVEACQPAACPQPVKVEGACCPVCL.

Belongs to the peroxidase family. XPO subfamily. As to quaternary structure, homotrimer; disulfide-linked. The homotrimer form is predominant. Homooligomer; disulfide-linked. Oligomerization occurs intracellularly before C-terminal proteolytic cleavage. Interacts with PXDNL; this interaction inhibits the peroxidase activity of PXDN. Requires Ca(2+) as cofactor. The cofactor is heme b. In terms of processing, processed by FURIN and the proteolytic processing largely depends on the peroxidase activity of PXDN. The proteolytic cleavage occurs after intracellular homotrimerization and releases into the extracellular matrix a large, catalytically active fragment and a smaller fragment consisting primarily of the C-terminal VWFC domain. The processing enhances both peroxidase activity and sulfilimine cross-links formation. Highly expressed in the cardiovascular system. In the embryo, expressed in the corneal epithelial layer. In the adult eyes, expressed in the corneal and lens epithelium. Expressed in lung.

Its subcellular location is the secreted. It is found in the extracellular space. The protein localises to the extracellular matrix. The protein resides in the endoplasmic reticulum. It localises to the cell surface. Its subcellular location is the basement membrane. The catalysed reaction is L-lysyl-[collagen] + L-methionyl-[collagen] + H2O2 = [collagen]-L-lysyl-N-S-L-methionyl-[collagen] + 2 H2O + H(+). The enzyme catalyses bromide + H2O2 = hypobromite + H2O. It carries out the reaction L-lysyl-[collagen] + L-methionyl-[collagen] + hypobromite = [collagen]-L-lysyl-N-S-L-methionyl-[collagen] + bromide + H2O + H(+). It catalyses the reaction (5R)-5-hydroxy-L-lysyl-[collagen] + L-methionyl-[collagen] + hypobromite = [collagen]-(5R)-5-hydroxy-L-lysyl-N-S-L-methionyl-[collagen] + bromide + H2O + H(+). The catalysed reaction is (5R)-5-hydroxy-L-lysyl-[collagen] + L-methionyl-[collagen] + H2O2 = [collagen]-(5R)-5-hydroxy-L-lysyl-N-S-L-methionyl-[collagen] + 2 H2O + H(+). The enzyme catalyses L-tyrosyl-[protein] + bromide + H2O2 + H(+) = 3-bromo-L-tyrosyl-[protein] + 2 H2O. It carries out the reaction hypobromite + L-tyrosyl-[protein] + H(+) = 3-bromo-L-tyrosyl-[protein] + H2O. Its activity is regulated as follows. Thiocyanate inhibits the formation of 3-bromotyrosine. Its function is as follows. Catalyzes the two-electron oxidation of bromide by hydrogen peroxide and generates hypobromite as a reactive intermediate which mediates the formation of sulfilimine cross-links between methionine and hydroxylysine residues within an uncross-linked collagen IV/COL4A1 NC1 hexamer. In turns, directly contributes to the collagen IV network-dependent fibronectin/FN and laminin assembly, which is required for full extracellular matrix (ECM)-mediated signaling. Thus, sulfilimine cross-links are essential for growth factor-induced cell proliferation and survival in endothelial cells, an event essential to basement membrane integrity. In addition, through the bromide oxidation, may promote tubulogenesis and induce angiogenesis through ERK1/2, Akt, and FAK pathways. Moreover brominates alpha2 collagen IV chain/COL4A2 at 'Tyr-1480' and leads to bromine enrichment of the basement membranes. In vitro, can also catalyze the two-electron oxidation of thiocyanate and iodide and these two substrates could effectively compete with bromide and thus inhibit the formation of sulfilimine bonds. Binds laminins. May play a role in the organization of eyeball structure and lens development during eye development. The polypeptide is Peroxidasin homolog (Mus musculus (Mouse)).